A 179-amino-acid chain; its full sequence is Disulfide bond formation protein B (179 aa).

The Cytoplasmic segment spans residues 1–14 (MLSYFKELSLNRTA). Residues 15 to 31 (WLLLAFVAFALEASAIY) traverse the membrane as a helical segment. The Periplasmic segment spans residues 32-49 (FQYGMGLVPCVMCVYERL). Cysteine 41 and cysteine 44 are joined by a disulfide. Residues 50–65 (AIFGLLIAGLVGAISP) traverse the membrane as a helical segment. The Cytoplasmic portion of the chain corresponds to 66-72 (RFFLTRW). Residues 73–90 (LALLLWGFSAFKGLALAI) form a helical membrane-spanning segment. The Periplasmic segment spans residues 91 to 146 (KHHDYQANPSPWNQCEFKPEFPQTMPFDQWFPSIFAPGPVNCSEKQWEMFGLGMPE). A disulfide bridge links cysteine 105 with cysteine 132. The helical transmembrane segment at 147 to 165 (WLILAFSIFALMFVIVLLS) threads the bilayer. The Cytoplasmic portion of the chain corresponds to 166-179 (QFKRAKPQYRSVFR).

The protein belongs to the DsbB family.

The protein resides in the cell inner membrane. Required for disulfide bond formation in some periplasmic proteins. Acts by oxidizing the DsbA protein. The polypeptide is Disulfide bond formation protein B (Actinobacillus pleuropneumoniae serotype 5b (strain L20)).